We begin with the raw amino-acid sequence, 290 residues long: MFQGSIVAIVTPFKNGAVDEEKLRELVEFQIENGTDAIVPCGTTGESSTLSYVEHDRVIQVVVEQVNKRVPVIAGTGSNSTHEAIEITQHAKELGADGALLVTPYYNKPSQEGLFRHYKAVADAVALPQILYNVPGRTGVNLLPETVARLSVHQNIVAIKEATGSLQQASEVLALCGDKIDVLSGDDFITLPIMAAGGKGVISVTANIMPKEVSSLVDAFNAGNMEEARRLHLYLLKISNAMFIESNPVPVKAAVSLMGKCSSEVRLPLAPLMEANLAKLTAIMKEYKLI.

Residue Thr-44 participates in pyruvate binding. The active-site Proton donor/acceptor is the Tyr-132. Lys-160 serves as the catalytic Schiff-base intermediate with substrate. A pyruvate-binding site is contributed by Ile-202.

The protein belongs to the DapA family. As to quaternary structure, homotetramer; dimer of dimers.

It localises to the cytoplasm. The enzyme catalyses L-aspartate 4-semialdehyde + pyruvate = (2S,4S)-4-hydroxy-2,3,4,5-tetrahydrodipicolinate + H2O + H(+). It participates in amino-acid biosynthesis; L-lysine biosynthesis via DAP pathway; (S)-tetrahydrodipicolinate from L-aspartate: step 3/4. Functionally, catalyzes the condensation of (S)-aspartate-beta-semialdehyde [(S)-ASA] and pyruvate to 4-hydroxy-tetrahydrodipicolinate (HTPA). The protein is 4-hydroxy-tetrahydrodipicolinate synthase of Citrifermentans bemidjiense (strain ATCC BAA-1014 / DSM 16622 / JCM 12645 / Bem) (Geobacter bemidjiensis).